Reading from the N-terminus, the 180-residue chain is Alpha-S2-casein-like A (180 aa).

A signal peptide spans 1-15 (MRFFVFTCLLAVALA). A phosphoserine mark is found at Ser-23 and Ser-25. The segment at 46–66 (PTNQETPSVSSSEESVEVQTE) is disordered.

The protein belongs to the alpha-casein family. In terms of tissue distribution, mammary gland specific. Secreted in milk.

Its subcellular location is the secreted. Its function is as follows. Important role in the capacity of milk to transport calcium phosphate. The chain is Alpha-S2-casein-like A (CSN1S2A) from Oryctolagus cuniculus (Rabbit).